The sequence spans 167 residues: General odorant-binding protein 1 (167 aa).

Positions 1-22 (MAHTLQTVVLLLGTSILHPILA) are cleaved as a signal peptide. Cystine bridges form between Cys-41–Cys-76, Cys-72–Cys-130, and Cys-119–Cys-139.

Belongs to the PBP/GOBP family. In terms of tissue distribution, antenna.

Its function is as follows. Present in the aqueous fluid surrounding olfactory sensory dendrites and are thought to aid in the capture and transport of hydrophobic odorants into and through this fluid. This chain is General odorant-binding protein 1, found in Antheraea pernyi (Chinese oak silk moth).